Reading from the N-terminus, the 535-residue chain is Glucan 1,6-alpha-glucosidase (535 aa).

The Nucleophile role is filled by Asp-194. Glu-236 functions as the Proton donor in the catalytic mechanism.

It belongs to the glycosyl hydrolase 13 family.

It is found in the cytoplasm. It catalyses the reaction Hydrolysis of (1-&gt;6)-alpha-D-glucosidic linkages in (1-&gt;6)-alpha-D-glucans and derived oligosaccharides.. Its function is as follows. The physiological substrates may be short isomaltosaccharides. The protein is Glucan 1,6-alpha-glucosidase (dexB) of Streptococcus pneumoniae serotype 4 (strain ATCC BAA-334 / TIGR4).